Here is a 232-residue protein sequence, read N- to C-terminus: tRNA1(Val) (adenine(37)-N6)-methyltransferase (232 aa).

This sequence belongs to the methyltransferase superfamily. tRNA (adenine-N(6)-)-methyltransferase family.

The protein resides in the cytoplasm. It carries out the reaction adenosine(37) in tRNA1(Val) + S-adenosyl-L-methionine = N(6)-methyladenosine(37) in tRNA1(Val) + S-adenosyl-L-homocysteine + H(+). Its function is as follows. Specifically methylates the adenine in position 37 of tRNA(1)(Val) (anticodon cmo5UAC). The chain is tRNA1(Val) (adenine(37)-N6)-methyltransferase from Pseudoalteromonas translucida (strain TAC 125).